The following is a 941-amino-acid chain: Endoglucanase (941 aa).

The signal sequence occupies residues 1 to 29 (MKIKQIKQSLSLLLIITLIMSLFVPMASA). 3 consecutive SLH domains span residues 37–94 (NAFP…GLEA), 95–158 (SSKD…LSLP), and 161–224 (QREY…DYLY). The active-site Proton donor is the Glu373. The active-site Nucleophile is Glu485.

It belongs to the glycosyl hydrolase 5 (cellulase A) family.

The catalysed reaction is Endohydrolysis of (1-&gt;4)-beta-D-glucosidic linkages in cellulose, lichenin and cereal beta-D-glucans.. The polypeptide is Endoglucanase (Bacillus sp. (strain KSM-635)).